The chain runs to 432 residues: Tol-Pal system protein TolB (432 aa).

The signal sequence occupies residues 1-21 (MKKVIYTIVGFVFMWSTSVYA).

This sequence belongs to the TolB family. In terms of assembly, the Tol-Pal system is composed of five core proteins: the inner membrane proteins TolA, TolQ and TolR, the periplasmic protein TolB and the outer membrane protein Pal. They form a network linking the inner and outer membranes and the peptidoglycan layer.

It localises to the periplasm. In terms of biological role, part of the Tol-Pal system, which plays a role in outer membrane invagination during cell division and is important for maintaining outer membrane integrity. The chain is Tol-Pal system protein TolB from Hydrogenovibrio crunogenus (strain DSM 25203 / XCL-2) (Thiomicrospira crunogena).